The following is a 215-amino-acid chain: uncharacterized protein (215 aa).

This is an uncharacterized protein from Escherichia coli (strain K12).